The sequence spans 122 residues: UPF0344 protein BcerKBAB4_1054 (122 aa).

The next 4 membrane-spanning stretches (helical) occupy residues 6–26 (ITAWALGLILFFVAYSLYSAG), 38–58 (LMYIIIIVTGFMLYMSIVKTA), 65–85 (WYGMKMLAGILVIAGMEMVLV), and 92–112 (PTGAVWGLFIVALVAVLYLGL).

The protein belongs to the UPF0344 family.

The protein resides in the cell membrane. The polypeptide is UPF0344 protein BcerKBAB4_1054 (Bacillus mycoides (strain KBAB4) (Bacillus weihenstephanensis)).